Consider the following 261-residue polypeptide: ATP synthase subunit a (261 aa).

The propeptide at 1–14 (MSTLSFNNISTEVL) is removed in mature form. Helical transmembrane passes span 38–58 (ITNIGFYLTIGAFFFLVINLL), 96–116 (IYFPFIYTLFIFILINNLIGM), 126–146 (HFVVTFALSFTIVLGATILGF), 153–173 (FFSLLVPAGCPLALLPLLVLI), 191–211 (ANILSGHMLLHILAGFTYNIM), 214–234 (GIIFFFLGLIPLAFIIAFSGL), and 235–255 (ELGIAFIQAQVFVVLTSGYIK).

It belongs to the ATPase A chain family. In terms of assembly, F-type ATPases have 2 components, CF(1) - the catalytic core - and CF(0) - the membrane proton channel. CF(1) has five subunits: alpha(3), beta(3), gamma(1), delta(1), epsilon(1). CF(0) has three main subunits: a, b and c.

Its subcellular location is the mitochondrion inner membrane. Mitochondrial membrane ATP synthase (F(1)F(0) ATP synthase or Complex V) produces ATP from ADP in the presence of a proton gradient across the membrane which is generated by electron transport complexes of the respiratory chain. F-type ATPases consist of two structural domains, F(1) - containing the extramembraneous catalytic core and F(0) - containing the membrane proton channel, linked together by a central stalk and a peripheral stalk. During catalysis, ATP synthesis in the catalytic domain of F(1) is coupled via a rotary mechanism of the central stalk subunits to proton translocation. Key component of the proton channel; it may play a direct role in the translocation of protons across the membrane. The chain is ATP synthase subunit a (atp-6) from Neurospora crassa (strain ATCC 24698 / 74-OR23-1A / CBS 708.71 / DSM 1257 / FGSC 987).